Reading from the N-terminus, the 231-residue chain is Demethylmenaquinone methyltransferase (231 aa).

Residues Thr62, Asp80, 100-101, and Ser117 each bind S-adenosyl-L-methionine; that span reads DA.

This sequence belongs to the class I-like SAM-binding methyltransferase superfamily. MenG/UbiE family.

It catalyses the reaction a 2-demethylmenaquinol + S-adenosyl-L-methionine = a menaquinol + S-adenosyl-L-homocysteine + H(+). Its pathway is quinol/quinone metabolism; menaquinone biosynthesis; menaquinol from 1,4-dihydroxy-2-naphthoate: step 2/2. Its function is as follows. Methyltransferase required for the conversion of demethylmenaquinol (DMKH2) to menaquinol (MKH2). In Mycobacterium marinum (strain ATCC BAA-535 / M), this protein is Demethylmenaquinone methyltransferase.